The following is a 101-amino-acid chain: Small ribosomal subunit protein bS18c (101 aa).

Belongs to the bacterial ribosomal protein bS18 family. Part of the 30S ribosomal subunit.

The protein localises to the plastid. The protein resides in the chloroplast. This is Small ribosomal subunit protein bS18c from Gossypium hirsutum (Upland cotton).